The primary structure comprises 76 residues: Large ribosomal subunit protein bL31 (76 aa).

The protein belongs to the bacterial ribosomal protein bL31 family. Type A subfamily. In terms of assembly, part of the 50S ribosomal subunit.

Functionally, binds the 23S rRNA. This Picosynechococcus sp. (strain ATCC 27264 / PCC 7002 / PR-6) (Agmenellum quadruplicatum) protein is Large ribosomal subunit protein bL31.